The primary structure comprises 179 residues: Large ribosomal subunit protein uL5 (179 aa).

This sequence belongs to the universal ribosomal protein uL5 family. As to quaternary structure, part of the 50S ribosomal subunit; part of the 5S rRNA/L5/L18/L25 subcomplex. Contacts the 5S rRNA and the P site tRNA. Forms a bridge to the 30S subunit in the 70S ribosome.

In terms of biological role, this is one of the proteins that bind and probably mediate the attachment of the 5S RNA into the large ribosomal subunit, where it forms part of the central protuberance. In the 70S ribosome it contacts protein S13 of the 30S subunit (bridge B1b), connecting the 2 subunits; this bridge is implicated in subunit movement. Contacts the P site tRNA; the 5S rRNA and some of its associated proteins might help stabilize positioning of ribosome-bound tRNAs. The polypeptide is Large ribosomal subunit protein uL5 (Shewanella loihica (strain ATCC BAA-1088 / PV-4)).